A 279-amino-acid chain; its full sequence is Large ribosomal subunit protein mL46 (279 aa).

At Lys-230 the chain carries N6-acetyllysine.

The protein belongs to the mitochondrion-specific ribosomal protein mL46 family. As to quaternary structure, component of the mitochondrial large ribosomal subunit (mt-LSU). Mature mammalian 55S mitochondrial ribosomes consist of a small (28S) and a large (39S) subunit. The 28S small subunit contains a 12S ribosomal RNA (12S mt-rRNA) and 30 different proteins. The 39S large subunit contains a 16S rRNA (16S mt-rRNA), a copy of mitochondrial valine transfer RNA (mt-tRNA(Val)), which plays an integral structural role, and 52 different proteins. mL46 is located at the central protuberance.

It is found in the mitochondrion. The polypeptide is Large ribosomal subunit protein mL46 (MRPL46) (Homo sapiens (Human)).